The sequence spans 315 residues: Methionyl-tRNA formyltransferase (315 aa).

Residue 113–116 (SILP) coordinates (6S)-5,6,7,8-tetrahydrofolate.

Belongs to the Fmt family.

The enzyme catalyses L-methionyl-tRNA(fMet) + (6R)-10-formyltetrahydrofolate = N-formyl-L-methionyl-tRNA(fMet) + (6S)-5,6,7,8-tetrahydrofolate + H(+). In terms of biological role, attaches a formyl group to the free amino group of methionyl-tRNA(fMet). The formyl group appears to play a dual role in the initiator identity of N-formylmethionyl-tRNA by promoting its recognition by IF2 and preventing the misappropriation of this tRNA by the elongation apparatus. In Vibrio parahaemolyticus serotype O3:K6 (strain RIMD 2210633), this protein is Methionyl-tRNA formyltransferase.